We begin with the raw amino-acid sequence, 389 residues long: Sinapine esterase (389 aa).

The first 25 residues, 1-25, serve as a signal peptide directing secretion; it reads MASSLKKLITSFLLFFFYTIIVASS. Serine 41 (nucleophile) is an active-site residue. N-linked (GlcNAc...) asparagine glycans are attached at residues asparagine 104, asparagine 137, and asparagine 320. Catalysis depends on residues aspartate 345 and histidine 348. 2 N-linked (GlcNAc...) asparagine glycosylation sites follow: asparagine 372 and asparagine 383.

The protein belongs to the 'GDSL' lipolytic enzyme family. As to expression, expressed in most tissues or organs of the mature seedlings. Not expressed in roots of mature seedlings.

It is found in the secreted. It carries out the reaction O-sinapoylcholine + H2O = (E)-sinapate + choline + H(+). Inhibited by PMSF. Its function is as follows. Sinapine esterase that catalyzes that hydrolysis of sinapine, releasing choline and sinapate. Sinapine (O-sinapoylcholine) is the predominant phenolic compound in a complex group of sinapate esters in seeds of oilseed rape (B.napus). Sinapine has antinutritive activity and prevents the use of seed protein for food and feed. Shows broad substrate specificity towards various other choline esters, including phosphatidylcholine. This chain is Sinapine esterase, found in Brassica napus (Rape).